A 462-amino-acid polypeptide reads, in one-letter code: Protein Tube (462 aa).

Residues 27-152 form the Death domain; it reads YSRNTELRRV…SAADFVALDF (126 aa). The interval 218-265 is disordered; it reads RDKSVPQPSGNTPPIAPPRRQQRSTTNSNFATLTGTGTTSTTIPNVPN. Low complexity predominate over residues 249–259; sequence TLTGTGTTSTT. A run of 2 repeats spans residues 262–269 and 286–293. The interval 262–460 is 5 X approximate repeats; the sequence is NVPNLTILNP…ACNIPDLSEL (199 aa). Polar residues predominate over residues 301–317; it reads RATVSDNPSNRTSSTDP. The interval 301–462 is disordered; that stretch reads RATVSDNPSN…NIPDLSELQQ (162 aa). Repeat 3 spans residues 319-326; that stretch reads NIPRITLL. The segment covering 342–354 has biased composition (low complexity); sequence AKASTATTSTASS. A compositionally biased stretch (polar residues) spans 355-367; the sequence is NNLPMISALNISK. Residues 356-363 form repeat 4; the sequence is NLPMISAL. Residues 368–377 show a composition bias toward basic and acidic residues; the sequence is GSRETLRPES. A compositionally biased stretch (acidic residues) spans 387 to 403; it reads DDDDDNDGEEDGEEEYP. Residues 409–424 are compositionally biased toward low complexity; the sequence is NLSNSEQQSSNNDSSL. Polar residues predominate over residues 425 to 438; sequence TTVTGTSGDNSFEL. Residues 439–449 show a composition bias toward low complexity; it reads TNDSSSTSNDD. Residues 453-460 form repeat 5; that stretch reads NIPDLSEL.

Interacts (via Death domain) with pll (via Death domain). In terms of processing, phosphorylated by pll.

It localises to the cytoplasm. Its subcellular location is the cell membrane. Its function is as follows. Plays an essential role in the Tl receptor signaling pathway that establishes embryonic dorsoventral polarity; the signal directs import of dl into ventral and ventrolateral nuclei, thereby establishing dorsoventral polarity. Tub recruits pll to the plasma membrane and protein-protein interaction activates pll. Also has a role in pupal pattern formation. The polypeptide is Protein Tube (tub) (Drosophila melanogaster (Fruit fly)).